The primary structure comprises 217 residues: Large ribosomal subunit protein uL4 (217 aa).

The segment at 46 to 102 (KRQGTHSAKTRAEVSGGGRKPFRQKGTGRARQGSIRAPHFTGGGISHGPKPRDYSQR) is disordered.

The protein belongs to the universal ribosomal protein uL4 family. Part of the 50S ribosomal subunit.

Its function is as follows. One of the primary rRNA binding proteins, this protein initially binds near the 5'-end of the 23S rRNA. It is important during the early stages of 50S assembly. It makes multiple contacts with different domains of the 23S rRNA in the assembled 50S subunit and ribosome. Forms part of the polypeptide exit tunnel. This is Large ribosomal subunit protein uL4 from Corynebacterium diphtheriae (strain ATCC 700971 / NCTC 13129 / Biotype gravis).